We begin with the raw amino-acid sequence, 346 residues long: Probable dual-specificity RNA methyltransferase RlmN (346 aa).

Catalysis depends on Glu-92, which acts as the Proton acceptor. The Radical SAM core domain occupies 98–332 (TDQRLTVCVS…VSLRASRGLD (235 aa)). The cysteines at positions 105 and 337 are disulfide-linked. The [4Fe-4S] cluster site is built by Cys-112, Cys-116, and Cys-119. S-adenosyl-L-methionine-binding positions include 159 to 160 (GE), Ser-189, 218 to 220 (SLH), and Asn-294. Catalysis depends on Cys-337, which acts as the S-methylcysteine intermediate.

It belongs to the radical SAM superfamily. RlmN family. It depends on [4Fe-4S] cluster as a cofactor.

It is found in the cytoplasm. It catalyses the reaction adenosine(2503) in 23S rRNA + 2 reduced [2Fe-2S]-[ferredoxin] + 2 S-adenosyl-L-methionine = 2-methyladenosine(2503) in 23S rRNA + 5'-deoxyadenosine + L-methionine + 2 oxidized [2Fe-2S]-[ferredoxin] + S-adenosyl-L-homocysteine. The catalysed reaction is adenosine(37) in tRNA + 2 reduced [2Fe-2S]-[ferredoxin] + 2 S-adenosyl-L-methionine = 2-methyladenosine(37) in tRNA + 5'-deoxyadenosine + L-methionine + 2 oxidized [2Fe-2S]-[ferredoxin] + S-adenosyl-L-homocysteine. Its function is as follows. Specifically methylates position 2 of adenine 2503 in 23S rRNA and position 2 of adenine 37 in tRNAs. The polypeptide is Probable dual-specificity RNA methyltransferase RlmN (Synechococcus sp. (strain CC9311)).